An 81-amino-acid chain; its full sequence is Cytotoxin 3a (81 aa).

An N-terminal signal peptide occupies residues 1–21; it reads MKTLLLTLVVVTIVCLDLGYT. Intrachain disulfides connect cysteine 24–cysteine 42, cysteine 35–cysteine 59, cysteine 63–cysteine 74, and cysteine 75–cysteine 80.

This sequence belongs to the three-finger toxin family. Short-chain subfamily. Type IA cytotoxin sub-subfamily. In terms of assembly, monomer in solution; Homodimer and oligomer in the presence of negatively charged lipids forming a pore with a size ranging between 20 and 30 Angstroms. In terms of tissue distribution, expressed by the venom gland.

The protein localises to the secreted. Its subcellular location is the target cell membrane. Its function is as follows. Shows cytolytic activity on many different cells by forming pore in lipid membranes. In vivo, increases heart rate or kills the animal by cardiac arrest. In addition, it binds to heparin with high affinity, interacts with Kv channel-interacting protein 1 (KCNIP1) in a calcium-independent manner, and binds to integrin alpha-V/beta-3 (ITGAV/ITGB3) with moderate affinity. The polypeptide is Cytotoxin 3a (Naja atra (Chinese cobra)).